We begin with the raw amino-acid sequence, 504 residues long: Apolipoprotein N-acyltransferase (504 aa).

6 consecutive transmembrane segments (helical) span residues 6–26, 47–67, 83–103, 105–125, 153–173, and 186–206; these read LALTGGILLPFAFAPFGYALV, ALYGYLFGLGQFGIGVSWVFV, LTALFVAYLALFPALAGWLGV, AGGGSILVRTLLVFPAAWVVT, IAPVFGVFGVGWLLAVLAGLL, and FALLGAAVVLVGSTQFAKVQW. The region spanning 219 to 457 is the CN hydrolase domain; that stretch reads LQGNVPQDQK…REALTGMMQP (239 aa). Catalysis depends on Glu258, which acts as the Proton acceptor. The active site involves Lys317. Cys369 serves as the catalytic Nucleophile. A helical transmembrane segment spans residues 465 to 485; sequence ALWGDWPAIGLCAGIVGICFA.

It belongs to the CN hydrolase family. Apolipoprotein N-acyltransferase subfamily.

It localises to the cell inner membrane. The enzyme catalyses N-terminal S-1,2-diacyl-sn-glyceryl-L-cysteinyl-[lipoprotein] + a glycerophospholipid = N-acyl-S-1,2-diacyl-sn-glyceryl-L-cysteinyl-[lipoprotein] + a 2-acyl-sn-glycero-3-phospholipid + H(+). It functions in the pathway protein modification; lipoprotein biosynthesis (N-acyl transfer). Functionally, catalyzes the phospholipid dependent N-acylation of the N-terminal cysteine of apolipoprotein, the last step in lipoprotein maturation. In Methylococcus capsulatus (strain ATCC 33009 / NCIMB 11132 / Bath), this protein is Apolipoprotein N-acyltransferase.